We begin with the raw amino-acid sequence, 75 residues long: MARYFRRRKFCRFTAEGVVEIDYKDIATLKNYITESGKIVPSRITGTRAKYQRQLARCIKRARYLSLLPYTDRHQ.

The protein belongs to the bacterial ribosomal protein bS18 family. As to quaternary structure, part of the 30S ribosomal subunit. Forms a tight heterodimer with protein bS6.

In terms of biological role, binds as a heterodimer with protein bS6 to the central domain of the 16S rRNA, where it helps stabilize the platform of the 30S subunit. This is Small ribosomal subunit protein bS18 from Yersinia enterocolitica serotype O:8 / biotype 1B (strain NCTC 13174 / 8081).